A 639-amino-acid chain; its full sequence is Protein sly1 homolog (639 aa).

4 tandem repeats follow at residues 85 to 121 (DENL…NLAA), 203 to 245 (RNSA…FSFQ), 423 to 460 (LDLL…ERLK), and 464 to 500 (QAAG…GGGT). Residues 85–500 (DENLDRIQQD…QATQYEGGGT (416 aa)) form a 4 X approximate repeats region.

It belongs to the STXBP/unc-18/SEC1 family. As to expression, in embryos, from stage 14, expression is seen in posterior midgut, esophagus and salivary glands. No expression is seen in larval imaginal disks.

It is found in the cytoplasm. The protein localises to the membrane. Functionally, non-vital for development. The protein is Protein sly1 homolog (Slh) of Drosophila melanogaster (Fruit fly).